Consider the following 204-residue polypeptide: Guanylate kinase (204 aa).

In terms of domain architecture, Guanylate kinase-like spans 5–184; sequence GLLIVLSGPS…AVQRIKDIIA (180 aa). 12–19 serves as a coordination point for ATP; sequence GPSGVGKG.

This sequence belongs to the guanylate kinase family.

The protein resides in the cytoplasm. It carries out the reaction GMP + ATP = GDP + ADP. In terms of biological role, essential for recycling GMP and indirectly, cGMP. The protein is Guanylate kinase of Enterococcus faecalis (strain ATCC 700802 / V583).